Reading from the N-terminus, the 331-residue chain is Porphobilinogen deaminase (331 aa).

Cys-248 carries the post-translational modification S-(dipyrrolylmethanemethyl)cysteine. The tract at residues 307–331 (QLLQAPKQTGEPHDPDRHDKGTGRP) is disordered. A compositionally biased stretch (basic and acidic residues) spans 316–331 (GEPHDPDRHDKGTGRP).

It belongs to the HMBS family. As to quaternary structure, monomer. The cofactor is dipyrromethane.

The enzyme catalyses 4 porphobilinogen + H2O = hydroxymethylbilane + 4 NH4(+). Its pathway is porphyrin-containing compound metabolism; protoporphyrin-IX biosynthesis; coproporphyrinogen-III from 5-aminolevulinate: step 2/4. Functionally, tetrapolymerization of the monopyrrole PBG into the hydroxymethylbilane pre-uroporphyrinogen in several discrete steps. This is Porphobilinogen deaminase from Acidothermus cellulolyticus (strain ATCC 43068 / DSM 8971 / 11B).